Consider the following 137-residue polypeptide: Small ribosomal subunit protein uS11 (137 aa).

Over residues Met-1 to Pro-10 the composition is skewed to polar residues. Disordered stretches follow at residues Met-1–Gly-27 and Gly-116–Val-137. Positions Lys-12–Lys-21 are enriched in basic residues.

Belongs to the universal ribosomal protein uS11 family. In terms of assembly, part of the 30S ribosomal subunit. Interacts with proteins S7 and S18. Binds to IF-3.

Located on the platform of the 30S subunit, it bridges several disparate RNA helices of the 16S rRNA. Forms part of the Shine-Dalgarno cleft in the 70S ribosome. The sequence is that of Small ribosomal subunit protein uS11 from Rhodococcus erythropolis (strain PR4 / NBRC 100887).